Reading from the N-terminus, the 306-residue chain is MLAATLSVGLIAPLASPIQESRANTNIENIGDGAEVIKRTEDVSSKKWGVTQNVQFDFVKDKKYNKDALIVKMQGFINSRTSFSDVKGSGYELTKRMIWPFQYNIGLTTKDPNVSLINYLPKNKIETTDVGQTLGYNIGGNFQSAPSIGGNGSFNYSKTISYTQKSYVSEVDKQNSKSVKWGVKANEFVTPDGKKSAHDRYLFVQSPNGPTGSAREYFAPDNQLPPLVQSGFNPSFITTLSHEKGSSDTSEFEISYGRNLDITYATLFPRTGIYAERKHNAFVNRNFVVRYEVNWKTHEIKVKGHN.

The N-terminal stretch at 1–23 (MLAATLSVGLIAPLASPIQESRA) is a signal peptide.

The protein belongs to the aerolysin family. In terms of assembly, toxicity requires sequential binding and synergistic association of a class S and a class F component which form heterooligomeric complexes. LukEv (class S) associates with LukDv (class F).

The protein localises to the secreted. Part of a bi-component leucotoxin that acts by forming pores in the membrane of the target cells. The activity of LukEv-LukDv to rabbit leukocytes is similar to that of the Panton-Valentine leucocidin (PVL). LukEv-LukDv is hemolytic to rabbit red blood cells although the activity is only 8% of gamma-hemolysin. The polypeptide is Leucotoxin LukEv (lukEv) (Staphylococcus aureus (strain NCTC 8325 / PS 47)).